The chain runs to 249 residues: 23S rRNA (guanosine-2'-O-)-methyltransferase RlmB (249 aa).

3 residues coordinate S-adenosyl-L-methionine: G200, I220, and L229.

It belongs to the class IV-like SAM-binding methyltransferase superfamily. RNA methyltransferase TrmH family. RlmB subfamily.

It localises to the cytoplasm. The catalysed reaction is guanosine(2251) in 23S rRNA + S-adenosyl-L-methionine = 2'-O-methylguanosine(2251) in 23S rRNA + S-adenosyl-L-homocysteine + H(+). Specifically methylates the ribose of guanosine 2251 in 23S rRNA. The polypeptide is 23S rRNA (guanosine-2'-O-)-methyltransferase RlmB (Xanthomonas axonopodis pv. citri (strain 306)).